The primary structure comprises 66 residues: Venom protein 27.1 (66 aa).

Positions 1–22 are cleaved as a signal peptide; the sequence is MNTKTLIVVFLVCLLVSEVVLA.

Post-translationally, contains 1 disulfide bond. Expressed by the venom gland.

Its subcellular location is the secreted. This is Venom protein 27.1 from Lychas mucronatus (Chinese swimming scorpion).